Here is a 653-residue protein sequence, read N- to C-terminus: Forkhead box protein O1 (653 aa).

Disordered stretches follow at residues 1–64 and 117–156; these read MAEA…ASAA and LHPAPPQPPPPGPLSQHPPVPPAAGPLAGQPRKSSSSRRN. Residue threonine 24 is modified to Phosphothreonine; by PKB/AKT1 or PKB/AKT2 and SGK1. Positions 35-64 are enriched in low complexity; that stretch reads SNSATSSPAPSGGATANPDASAGLPPASAA. Residues 119-140 are compositionally biased toward pro residues; it reads PAPPQPPPPGPLSQHPPVPPAA. A DNA-binding region (fork-head) is located at residues 157–233; the sequence is AWGNLSYADL…VQNEGTGKSS (77 aa). 2 DNA-binding regions span residues 209–216 and 232–235; these read NSIRHNLS and SSWW. At serine 210 the chain carries Phosphoserine; by STK4/MST1. Residues serine 216, serine 232, and serine 233 each carry the phosphoserine modification. The tract at residues 232 to 335 is disordered; that stretch reads SSWWMLNPEG…FSPIMTEQDD (104 aa). An N6-acetyllysine mark is found at lysine 243 and lysine 246. Residue serine 247 is modified to Phosphoserine; by CDK1. An omega-N-methylarginine; by PRMT1 mark is found at arginine 249 and arginine 251. The Nuclear localization signal signature appears at 249–251; the sequence is RRR. Phosphoserine; by PKB/AKT1 and SGK1 is present on serine 254. N6-acetyllysine is present on residues lysine 260, lysine 263, and lysine 272. A sufficient for interaction with NLK region spans residues 281–561; sequence GAGDSPGSQF…RLTPVKTPLQ (281 aa). Phosphoserine occurs at positions 285 and 296. Positions 307-324 are enriched in polar residues; that stretch reads NWSTFRPRTSSNASTISG. Serine 317 carries the post-translational modification Phosphoserine; by PKB/AKT1 or PKB/AKT2. Residue serine 320 is modified to Phosphoserine; by CK1 and SGK1. Phosphoserine is present on serine 323. Serine 327 bears the Phosphoserine; by DYRK1A mark. Threonine 331 is modified (phosphothreonine). The interval 361-457 is required for interaction with RUNX2; the sequence is SEISNPENME…GGLNQFNCAQ (97 aa). Lysine 421 carries the N6-acetyllysine modification. Residues 460 to 464 carry the Required for interaction with SIRT1 motif; it reads LKELL.

In terms of assembly, interacts with LRPPRC. Interacts with RUNX2; the interaction inhibits RUNX2 transcriptional activity and mediates the IGF1/insulin-dependent BGLAP expression in osteoblasts Interacts with PPP2R1A; the interaction regulates the dephosphorylation of FOXO1 at Thr-24 and Ser-254 leading to its nuclear import. Interacts with NLK. Interacts with SIRT1; the interaction results in the deacetylation of FOXO1 leading to activation of FOXO1-mediated transcription of genes involved in DNA repair and stress resistance. Binds to CDK1. Interacts with the 14-3-3 proteins, YWHAG and YWHAZ; the interactions require insulin-stimulated phosphorylation on Thr-24, promote nuclear exit and loss of transcriptional activity. Interacts with SKP2; the interaction ubiquitinates FOXO1 leading to its proteasomal degradation. The interaction requires the presence of KRIT1. Interacts (via the C-terminal half) with ATF4 (via its DNA-binding domain); the interaction occurs in osteoblasts, regulates glucose homeostasis via suppression of beta-cell proliferation and subsequent decrease in insulin production. Interacts with PRMT1; the interaction methylates FOXO1, prevents PKB/AKT1 phosphorylation and retains FOXO1 in the nucleus. Interacts with EP300 and CREBBP; the interactions acetylate FOXO1. Interacts with SIRT2; the interaction is disrupted in response to oxidative stress or serum deprivation, leading to increased level of acetylated FOXO1, which promotes stress-induced autophagy by stimulating E1-like activating enzyme ATG7. Interacts (acetylated form) with ATG7; the interaction is increased in response to oxidative stress or serum deprivation and promotes the autophagic process leading to cell death. Interacts (acetylated form) with PPARG. Interacts with XBP1; this interaction is direct and leads to FOXO1 ubiquitination and degradation via the proteasome pathway. Interacts with WDFY2. Forms a complex with WDFY2 and AKT1. Interacts with CRY1. Interacts with PPIA/CYPA; the interaction promotes FOXO1 dephosphorylation, nuclear accumulation and transcriptional activity. Interacts with TOX4; FOXO1 is required for full induction of TOX4-dependent activity and the interaction is inhibited by insulin. Interacts (when phosphorylated on Ser-254) with STUB1/CHIP. In terms of processing, phosphorylation by NLK promotes nuclear export and inhibits the transcriptional activity. In response to growth factors, phosphorylation on Thr-24, Ser-254 and Ser-320 by PKB/AKT1 promotes nuclear export and inactivation of transactivational activity. Phosphorylation on Thr-24 is required for binding 14-3-3 proteins. Phosphorylation of Ser-254 decreases DNA-binding activity and promotes the phosphorylation of Thr-24 and Ser-317, permitting phosphorylation of Ser-320 and Ser-323, probably by CDK1, leading to nuclear exclusion and loss of function. Stress signals, such as response to oxygen or nitric oxide, attenuate the PKB/AKT1-mediated phosphorylation leading to nuclear retention. Phosphorylation of Ser-327 is independent of IGF1 and leads to reduced function. Dephosphorylated on Thr-24 and Ser-254 by PP2A in beta-cells under oxidative stress leading to nuclear retention. Phosphorylation of Ser-247 by CDK1 disrupts binding of 14-3-3 proteins leading to nuclear accumulation and has no effect on DNA binding nor transcriptional activity. Phosphorylation by STK4/MST1 on Ser-210, upon oxidative stress, inhibits binding to 14-3-3 proteins and nuclear export. PPIA/CYPA promotes its dephosphorylation on Ser-254. Post-translationally, ubiquitinated by SKP2. Ubiquitination leads to proteasomal degradation. Ubiquitinated by STUB1/CHIP; when Ser-254 is phosphorylated. Methylation inhibits AKT1-mediated phosphorylation at Ser-254 and is increased by oxidative stress. In terms of processing, acetylated. Acetylation at Lys-260 and Lys-272 are necessary for autophagic cell death induction. Deacetylated by SIRT2 in response to oxidative stress or serum deprivation, thereby negatively regulating FOXO1-mediated autophagic cell death. Once in the nucleus, acetylated by CREBBP/EP300. Acetylation diminishes the interaction with target DNA and attenuates the transcriptional activity. It increases the phosphorylation at Ser-254. Deacetylation by SIRT1 results in reactivation of the transcriptional activity. Oxidative stress by hydrogen peroxide treatment appears to promote deacetylation and uncoupling of insulin-induced phosphorylation. By contrast, resveratrol acts independently of acetylation. Acetylated at Lys-421, promoting its localization to the nucleus and transcription factor activity. Deacetylation at Lys-421 by SIRT6, promotes its translocation into the cytoplasm, preventing its transcription factor activity. Deacetylation and subsequent inhibition by SIRT6 has different effects depending on cell types: it inhibits gluconeogenesis in hepatocytes, promotes glucose sensing in pancreatic beta-cells and regulates lipid catabolism in brown adipocytes.

It localises to the cytoplasm. The protein resides in the nucleus. Transcription factor that is the main target of insulin signaling and regulates metabolic homeostasis in response to oxidative stress. Binds to the insulin response element (IRE) with consensus sequence 5'-TT[G/A]TTTTG-3' and the related Daf-16 family binding element (DBE) with consensus sequence 5'-TT[G/A]TTTAC-3'. Activity suppressed by insulin. Main regulator of redox balance and osteoblast numbers and controls bone mass. Orchestrates the endocrine function of the skeleton in regulating glucose metabolism. Also acts as a key regulator of chondrogenic commitment of skeletal progenitor cells in response to lipid availability: when lipids levels are low, translocates to the nucleus and promotes expression of SOX9, which induces chondrogenic commitment and suppresses fatty acid oxidation. Acts synergistically with ATF4 to suppress osteocalcin/BGLAP activity, increasing glucose levels and triggering glucose intolerance and insulin insensitivity. Also suppresses the transcriptional activity of RUNX2, an upstream activator of osteocalcin/BGLAP. Acts as an inhibitor of glucose sensing in pancreatic beta cells by acting as a transcription repressor and suppressing expression of PDX1. In hepatocytes, promotes gluconeogenesis by acting together with PPARGC1A and CEBPA to activate the expression of genes such as IGFBP1, G6PC1 and PCK1. Also promotes gluconeogenesis by directly promoting expression of PPARGC1A and G6PC1. Important regulator of cell death acting downstream of CDK1, PKB/AKT1 and STK4/MST1. Promotes neural cell death. Mediates insulin action on adipose tissue. Regulates the expression of adipogenic genes such as PPARG during preadipocyte differentiation and, adipocyte size and adipose tissue-specific gene expression in response to excessive calorie intake. Regulates the transcriptional activity of GADD45A and repair of nitric oxide-damaged DNA in beta-cells. Required for the autophagic cell death induction in response to starvation or oxidative stress in a transcription-independent manner. Mediates the function of MLIP in cardiomyocytes hypertrophy and cardiac remodeling. Positive regulator of apoptosis in cardiac smooth muscle cells as a result of its transcriptional activation of pro-apoptotic genes. Regulates endothelial cell (EC) viability and apoptosis in a PPIA/CYPA-dependent manner via transcription of CCL2 and BCL2L11 which are involved in EC chemotaxis and apoptosis. In Ictidomys tridecemlineatus (Thirteen-lined ground squirrel), this protein is Forkhead box protein O1 (FOXO1).